The sequence spans 329 residues: Beta-ketoacyl-[acyl-carrier-protein] synthase III (329 aa).

Residues Cys-123 and His-256 contribute to the active site. The interval 257–261 (QANIR) is ACP-binding. Asn-286 is an active-site residue.

This sequence belongs to the thiolase-like superfamily. FabH family. As to quaternary structure, homodimer.

Its subcellular location is the cytoplasm. The catalysed reaction is malonyl-[ACP] + acetyl-CoA + H(+) = 3-oxobutanoyl-[ACP] + CO2 + CoA. It participates in lipid metabolism; fatty acid biosynthesis. In terms of biological role, catalyzes the condensation reaction of fatty acid synthesis by the addition to an acyl acceptor of two carbons from malonyl-ACP. Catalyzes the first condensation reaction which initiates fatty acid synthesis and may therefore play a role in governing the total rate of fatty acid production. Possesses both acetoacetyl-ACP synthase and acetyl transacylase activities. Its substrate specificity determines the biosynthesis of branched-chain and/or straight-chain of fatty acids. This Burkholderia cenocepacia (strain HI2424) protein is Beta-ketoacyl-[acyl-carrier-protein] synthase III.